The primary structure comprises 424 residues: Keratin, type I cytoskeletal 20 (424 aa).

The interval 1-69 (MDFSRRSFHR…TGGGDLFVGN (69 aa)) is head. Ser13 carries the post-translational modification Phosphoserine; by MAPKAPK2, MAPKAPK3 and PKC. The coil 1A stretch occupies residues 70–105 (EKMAMQNLNDRLASYLEKVRTLEQSNSKLEVQIKQW). An IF rod domain is found at 70–381 (EKMAMQNLND…RLLEGEDVKT (312 aa)). Positions 106-123 (YETNAPRAGRDYSAYYRQ) are linker 1. The segment at 124–215 (IEELRSQIKD…KEHQEEVDGL (92 aa)) is coil 1B. Residues 216-238 (HKHLGNTVNVEVDAAPGLNLGVI) form a linker 12 region. A coil 2 region spans residues 239–377 (MNEMRQKYEV…ATYRRLLEGE (139 aa)). Residues 378-424 (DVKTTEYQLSTLEERDIKKTRKIKTVVQEVVDGKVVSSEVKEVEENI) form a tail region.

This sequence belongs to the intermediate filament family. As to quaternary structure, heterotetramer of two type I and two type II keratins. Associates with KRT8. In terms of processing, hyperphosphorylation at Ser-13 occurs during the early stages of apoptosis but becomes less prominent during the later stages. Phosphorylation at Ser-13 also increases in response to stress brought on by cell injury. Proteolytically cleaved by caspases during apoptosis. Cleavage occurs at Asp-228. In terms of tissue distribution, expressed predominantly in the intestinal epithelium. Expressed in luminal cells of colonic mucosa. Also expressed in the Merkel cells of keratinized oral mucosa; specifically at the tips of some rete ridges of the gingival mucosa, in the basal layer of the palatal mucosa and in the taste buds of lingual mucosa.

It localises to the cytoplasm. Functionally, plays a significant role in maintaining keratin filament organization in intestinal epithelia. When phosphorylated, plays a role in the secretion of mucin in the small intestine. In Homo sapiens (Human), this protein is Keratin, type I cytoskeletal 20 (KRT20).